The chain runs to 1111 residues: NBPF family member NBPF9 (1111 aa).

A coiled-coil region spans residues 70-130 (MLRNERQFKE…RSLNEHLQAL (61 aa)). The interval 161–198 (KLSPENDEDEDEDVQVEEDEKVLESSAPREVQKAEESK) is disordered. A compositionally biased stretch (acidic residues) spans 165–181 (ENDEDEDEDVQVEEDEK). Positions 165 to 259 (ENDEDEDEDV…ECQDALNILP (95 aa)) constitute an Olduvai 1 domain. Residues 341-401 (MLRNERQFKE…RSLNEHLQAL (61 aa)) adopt a coiled-coil conformation. 8 consecutive Olduvai domains span residues 436 to 528 (ENDN…HIIP), 529 to 600 (ENES…VDIG), 601 to 692 (RHRW…PSCP), 695 to 750 (SREL…LDLD), 751 to 843 (RIKK…RSKK), 844 to 919 (KRRR…LDVD), 920 to 1012 (RIKK…RSKK), and 1013 to 1111 (ERRR…IFPQ). 2 disordered regions span residues 451 to 474 (EKVQ…PEDS) and 510 to 569 (TLIG…STPS). 2 stretches are compositionally biased toward acidic residues: residues 530-539 (NESDDEEEEE) and 550-562 (ESEE…ESWD). 2 disordered regions span residues 829 to 871 (KKGK…LDEK) and 999 to 1033 (KGKG…PRLN). 2 stretches are compositionally biased toward basic residues: residues 831–849 (GKGK…RRGR) and 1000–1018 (GKGK…RRGR).

It belongs to the NBPF family. In terms of tissue distribution, expressed in a neuroblastoma cell line.

Its subcellular location is the cytoplasm. This chain is NBPF family member NBPF9, found in Homo sapiens (Human).